The following is a 45-amino-acid chain: Photosystem II reaction center protein K (45 aa).

The propeptide occupies 1-8 (MEAALLLA). A helical membrane pass occupies residues 24-44 (LPVIPVFFLLLAFVWQAAVGF).

The protein belongs to the PsbK family. In terms of assembly, PSII is composed of 1 copy each of membrane proteins PsbA, PsbB, PsbC, PsbD, PsbE, PsbF, PsbH, PsbI, PsbJ, PsbK, PsbL, PsbM, PsbT, PsbX, PsbY, PsbZ, Psb30/Ycf12, peripheral proteins PsbO, CyanoQ (PsbQ), PsbU, PsbV and a large number of cofactors. It forms dimeric complexes.

Its subcellular location is the cellular thylakoid membrane. One of the components of the core complex of photosystem II (PSII). PSII is a light-driven water:plastoquinone oxidoreductase that uses light energy to abstract electrons from H(2)O, generating O(2) and a proton gradient subsequently used for ATP formation. It consists of a core antenna complex that captures photons, and an electron transfer chain that converts photonic excitation into a charge separation. This Synechococcus elongatus (strain ATCC 33912 / PCC 7942 / FACHB-805) (Anacystis nidulans R2) protein is Photosystem II reaction center protein K.